The following is a 379-amino-acid chain: Serine/threonine-protein kinase spe-6 (379 aa).

A Protein kinase domain is found at 26–302; the sequence is WKVLRNIYSG…SQAATEHQVT (277 aa). ATP contacts are provided by residues 32–40 and lysine 55; that span reads IYSGPFSDV. The active-site Proton acceptor is the aspartate 147. Residues 331-379 form a disordered region; it reads ASAKLDAKDNANESMDIEFDDMPPKEGISKSLSAEKSCTKNVETARTEK. A compositionally biased stretch (polar residues) spans 360-372; sequence KSLSAEKSCTKNV.

It belongs to the protein kinase superfamily. CK1 Ser/Thr protein kinase family.

The catalysed reaction is L-seryl-[protein] + ATP = O-phospho-L-seryl-[protein] + ADP + H(+). The enzyme catalyses L-threonyl-[protein] + ATP = O-phospho-L-threonyl-[protein] + ADP + H(+). In terms of biological role, serine/threonine-protein kinase which is involved in spermatogenesis. In spermatocytes, regulates meiosis and the localization and assembly of major sperm protein (MSP) into fibrous bodies. In addition, may suppress the initiation of spermiogenesis downstream of spe-8, spe-12, spe-27 and spe-29. This chain is Serine/threonine-protein kinase spe-6, found in Caenorhabditis elegans.